The primary structure comprises 361 residues: 3-dehydroquinate synthase (361 aa).

NAD(+)-binding positions include Asp70 to Lys75, Gly104 to Asp108, Thr128 to Thr129, Lys141, and Lys150. 3 residues coordinate Zn(2+): Glu183, His246, and His263.

It belongs to the sugar phosphate cyclases superfamily. Dehydroquinate synthase family. Requires Co(2+) as cofactor. Zn(2+) serves as cofactor. NAD(+) is required as a cofactor.

Its subcellular location is the cytoplasm. It carries out the reaction 7-phospho-2-dehydro-3-deoxy-D-arabino-heptonate = 3-dehydroquinate + phosphate. The protein operates within metabolic intermediate biosynthesis; chorismate biosynthesis; chorismate from D-erythrose 4-phosphate and phosphoenolpyruvate: step 2/7. Its function is as follows. Catalyzes the conversion of 3-deoxy-D-arabino-heptulosonate 7-phosphate (DAHP) to dehydroquinate (DHQ). In Teredinibacter turnerae (strain ATCC 39867 / T7901), this protein is 3-dehydroquinate synthase.